The following is a 136-amino-acid chain: Small ribosomal subunit protein uS12 (136 aa).

Asp89 carries the 3-methylthioaspartic acid modification. The interval 104-136 (TAGVNGRTQRRSKYGAKRPKPGQAAAAAKGKKK) is disordered. Residues 111 to 123 (TQRRSKYGAKRPK) are compositionally biased toward basic residues. Residues 124-136 (PGQAAAAAKGKKK) show a composition bias toward low complexity.

It belongs to the universal ribosomal protein uS12 family. As to quaternary structure, part of the 30S ribosomal subunit. Contacts proteins S8 and S17. May interact with IF1 in the 30S initiation complex.

With S4 and S5 plays an important role in translational accuracy. Functionally, interacts with and stabilizes bases of the 16S rRNA that are involved in tRNA selection in the A site and with the mRNA backbone. Located at the interface of the 30S and 50S subunits, it traverses the body of the 30S subunit contacting proteins on the other side and probably holding the rRNA structure together. The combined cluster of proteins S8, S12 and S17 appears to hold together the shoulder and platform of the 30S subunit. This chain is Small ribosomal subunit protein uS12, found in Parabacteroides distasonis (strain ATCC 8503 / DSM 20701 / CIP 104284 / JCM 5825 / NCTC 11152).